A 424-amino-acid chain; its full sequence is Tyrosine--tRNA ligase (424 aa).

An L-tyrosine-binding site is contributed by Tyr-37. A 'HIGH' region motif is present at residues 42–51; the sequence is PTADSLHLGH. Residues Tyr-174 and Gln-178 each coordinate L-tyrosine. The 'KMSKS' region motif lies at 234 to 238; the sequence is KFGKT. Residue Lys-237 coordinates ATP. An S4 RNA-binding domain is found at 357–414; it reads TGLIDALVASGLAKSKSEARTFIQSGSVAINGNKAEALDHAIGGDELLYGRFTILRRG.

The protein belongs to the class-I aminoacyl-tRNA synthetase family. TyrS type 1 subfamily. In terms of assembly, homodimer.

It localises to the cytoplasm. The enzyme catalyses tRNA(Tyr) + L-tyrosine + ATP = L-tyrosyl-tRNA(Tyr) + AMP + diphosphate + H(+). Its function is as follows. Catalyzes the attachment of tyrosine to tRNA(Tyr) in a two-step reaction: tyrosine is first activated by ATP to form Tyr-AMP and then transferred to the acceptor end of tRNA(Tyr). This chain is Tyrosine--tRNA ligase, found in Dechloromonas aromatica (strain RCB).